Consider the following 173-residue polypeptide: Ribulose bisphosphate carboxylase small subunit, chloroplastic 1 (173 aa).

A chloroplast-targeting transit peptide spans 1–52 (MMVSTAAVARVRPAQTNMVGAFNGCRSSVAFPATRKANNDLSTLPSSGGRVS).

Belongs to the RuBisCO small chain family. In terms of assembly, heterohexadecamer of 8 large and 8 small subunits.

The protein localises to the plastid. Its subcellular location is the chloroplast. RuBisCO catalyzes two reactions: the carboxylation of D-ribulose 1,5-bisphosphate, the primary event in carbon dioxide fixation, as well as the oxidative fragmentation of the pentose substrate. Both reactions occur simultaneously and in competition at the same active site. Although the small subunit is not catalytic it is essential for maximal activity. This is Ribulose bisphosphate carboxylase small subunit, chloroplastic 1 from Lemna gibba (Swollen duckweed).